A 515-amino-acid chain; its full sequence is Galactose/methyl galactoside import ATP-binding protein MglA (515 aa).

2 consecutive ABC transporter domains span residues 8–243 (LEMR…VGRE) and 254–499 (IPKE…AKYL). 40-47 (GENGAGKS) provides a ligand contact to ATP.

Belongs to the ABC transporter superfamily. Galactose/methyl galactoside importer (TC 3.A.1.2.3) family. In terms of assembly, the complex is composed of one ATP-binding protein (MglA), two transmembrane proteins (MglC) and a solute-binding protein (MglB).

It localises to the cell membrane. The catalysed reaction is D-galactose(out) + ATP + H2O = D-galactose(in) + ADP + phosphate + H(+). The enzyme catalyses methyl beta-D-galactoside(out) + ATP + H2O = methyl beta-D-galactoside(in) + ADP + phosphate + H(+). Its function is as follows. Part of the ABC transporter complex MglABC involved in galactose/methyl galactoside import. Responsible for energy coupling to the transport system. This Clostridium perfringens (strain ATCC 13124 / DSM 756 / JCM 1290 / NCIMB 6125 / NCTC 8237 / Type A) protein is Galactose/methyl galactoside import ATP-binding protein MglA.